A 606-amino-acid chain; its full sequence is Elongation factor 4 (606 aa).

The region spanning 11–193 is the tr-type G domain; that stretch reads PHIRNFSIIA…RLVRDVPPPK (183 aa). GTP-binding positions include 23 to 28 and 140 to 143; these read DHGKST and NKMD.

The protein belongs to the TRAFAC class translation factor GTPase superfamily. Classic translation factor GTPase family. LepA subfamily.

The protein localises to the cell inner membrane. The enzyme catalyses GTP + H2O = GDP + phosphate + H(+). Functionally, required for accurate and efficient protein synthesis under certain stress conditions. May act as a fidelity factor of the translation reaction, by catalyzing a one-codon backward translocation of tRNAs on improperly translocated ribosomes. Back-translocation proceeds from a post-translocation (POST) complex to a pre-translocation (PRE) complex, thus giving elongation factor G a second chance to translocate the tRNAs correctly. Binds to ribosomes in a GTP-dependent manner. This is Elongation factor 4 from Chromohalobacter salexigens (strain ATCC BAA-138 / DSM 3043 / CIP 106854 / NCIMB 13768 / 1H11).